The following is a 244-amino-acid chain: MEKEDNGSKQSSSASVVSSRRRRRVVEPVEATLQRWEEEGLARARRVQAKGSKKGCMRGKGGPENPVCRFRGVRQRVWGKWVAEIREPVSHRGANSSRSKRLWLGTFATAAEAALAYDRAASVMYGPYARLNFPEDLGGGRKKDEEAESSGGYWLETNKAGNGVIETEGGKDYVVYNEDAIELGHDKTQNPMTDNEIVNPAVKSEEGYSYDRFKLDNGLLYNEPQSSSYHQGGGFDSYFEYFRF.

The segment at 1–25 (MEKEDNGSKQSSSASVVSSRRRRRV) is disordered. The Nuclear localization signal signature appears at 20–46 (RRRRRVVEPVEATLQRWEEEGLARARR). The segment at residues 69 to 134 (RFRGVRQRVW…YGPYARLNFP (66 aa)) is a DNA-binding region (AP2/ERF).

It belongs to the AP2/ERF transcription factor family. ERF subfamily. Expressed in xylem tissues, stigma, anthers and region where sepals and petals attach the peduncle.

The protein resides in the nucleus. In terms of biological role, transcriptional activator that binds specifically to the DNA sequence 5'-[AG]CCGAC-3'. Binding to the C-repeat/DRE element mediates abscisic acid-inducible transcription. Involved in the regulation of plant development and tolerance to abiotic stresses. This Arabidopsis thaliana (Mouse-ear cress) protein is Dehydration-responsive element-binding protein 2E (DREB2E).